We begin with the raw amino-acid sequence, 108 residues long: ATP-dependent Clp protease adapter protein ClpS (108 aa).

The protein belongs to the ClpS family. Binds to the N-terminal domain of the chaperone ClpA.

Its function is as follows. Involved in the modulation of the specificity of the ClpAP-mediated ATP-dependent protein degradation. In Cupriavidus necator (strain ATCC 17699 / DSM 428 / KCTC 22496 / NCIMB 10442 / H16 / Stanier 337) (Ralstonia eutropha), this protein is ATP-dependent Clp protease adapter protein ClpS.